The chain runs to 530 residues: Probable serine/threonine-protein kinase fnkB (530 aa).

One can recognise a Protein kinase domain in the interval 11–268 (WEIVETLKSN…SITLIDHPFL (258 aa)). ATP is bound by residues 17 to 25 (LKSNVFKVN) and Lys-43. Asp-131 (proton acceptor) is an active-site residue.

Belongs to the protein kinase superfamily. STE Ser/Thr protein kinase family. Mg(2+) is required as a cofactor.

The catalysed reaction is L-seryl-[protein] + ATP = O-phospho-L-seryl-[protein] + ADP + H(+). It carries out the reaction L-threonyl-[protein] + ATP = O-phospho-L-threonyl-[protein] + ADP + H(+). In Dictyostelium discoideum (Social amoeba), this protein is Probable serine/threonine-protein kinase fnkB.